We begin with the raw amino-acid sequence, 309 residues long: HPr kinase/phosphorylase (309 aa).

Catalysis depends on residues His-138 and Lys-159. 153–160 (GDSGIGKS) serves as a coordination point for ATP. Residue Ser-160 coordinates Mg(2+). Asp-177 functions as the Proton acceptor; for phosphorylation activity. Proton donor; for dephosphorylation activity in the catalytic mechanism. An important for the catalytic mechanism of both phosphorylation and dephosphorylation region spans residues 201-210 (LEIRGVGIID). Glu-202 serves as a coordination point for Mg(2+). Residue Arg-243 is part of the active site. Residues 264-269 (PVKTGR) are important for the catalytic mechanism of dephosphorylation.

It belongs to the HPrK/P family. In terms of assembly, homohexamer. Mg(2+) is required as a cofactor.

It carries out the reaction [HPr protein]-L-serine + ATP = [HPr protein]-O-phospho-L-serine + ADP + H(+). It catalyses the reaction [HPr protein]-O-phospho-L-serine + phosphate + H(+) = [HPr protein]-L-serine + diphosphate. Functionally, catalyzes the ATP- as well as the pyrophosphate-dependent phosphorylation of a specific serine residue in HPr, a phosphocarrier protein of the phosphoenolpyruvate-dependent sugar phosphotransferase system (PTS). HprK/P also catalyzes the pyrophosphate-producing, inorganic phosphate-dependent dephosphorylation (phosphorolysis) of seryl-phosphorylated HPr (P-Ser-HPr). The two antagonistic activities of HprK/P are regulated by several intracellular metabolites, which change their concentration in response to the absence or presence of rapidly metabolisable carbon sources (glucose, fructose, etc.) in the growth medium. Therefore, by controlling the phosphorylation state of HPr, HPrK/P is a sensor enzyme that plays a major role in the regulation of carbon metabolism and sugar transport: it mediates carbon catabolite repression (CCR), and regulates PTS-catalyzed carbohydrate uptake and inducer exclusion. This Streptococcus thermophilus (strain ATCC BAA-491 / LMD-9) protein is HPr kinase/phosphorylase.